Here is a 267-residue protein sequence, read N- to C-terminus: Small ribosomal subunit protein uS2 (267 aa).

The tract at residues 247–267 (LEDDILEDVEDEEEGDPEQGE) is disordered.

This sequence belongs to the universal ribosomal protein uS2 family.

This Synechococcus sp. (strain JA-3-3Ab) (Cyanobacteria bacterium Yellowstone A-Prime) protein is Small ribosomal subunit protein uS2.